A 204-amino-acid chain; its full sequence is N-(5'-phosphoribosyl)anthranilate isomerase (204 aa).

It belongs to the TrpF family.

It carries out the reaction N-(5-phospho-beta-D-ribosyl)anthranilate = 1-(2-carboxyphenylamino)-1-deoxy-D-ribulose 5-phosphate. It functions in the pathway amino-acid biosynthesis; L-tryptophan biosynthesis; L-tryptophan from chorismate: step 3/5. The polypeptide is N-(5'-phosphoribosyl)anthranilate isomerase (Geobacter sp. (strain M21)).